Reading from the N-terminus, the 444-residue chain is Phosphoribosylamine--glycine ligase (444 aa).

In terms of domain architecture, ATP-grasp spans Arg-109–Glu-324. Position 140–202 (Met-140–Thr-202) interacts with ATP. Positions 282, 294, and 296 each coordinate Mg(2+). Mn(2+)-binding residues include Gln-282, Glu-294, and Asn-296.

It belongs to the GARS family. It depends on Mg(2+) as a cofactor. Mn(2+) serves as cofactor.

It catalyses the reaction 5-phospho-beta-D-ribosylamine + glycine + ATP = N(1)-(5-phospho-beta-D-ribosyl)glycinamide + ADP + phosphate + H(+). Its pathway is purine metabolism; IMP biosynthesis via de novo pathway; N(1)-(5-phospho-D-ribosyl)glycinamide from 5-phospho-alpha-D-ribose 1-diphosphate: step 2/2. This is Phosphoribosylamine--glycine ligase from Methanococcus maripaludis (strain DSM 14266 / JCM 13030 / NBRC 101832 / S2 / LL).